Consider the following 581-residue polypeptide: Arginine--tRNA ligase (581 aa).

The 'HIGH' region motif lies at 126–136 (PNLAKEMHVGH).

This sequence belongs to the class-I aminoacyl-tRNA synthetase family. In terms of assembly, monomer.

It localises to the cytoplasm. The catalysed reaction is tRNA(Arg) + L-arginine + ATP = L-arginyl-tRNA(Arg) + AMP + diphosphate. This Shewanella oneidensis (strain ATCC 700550 / JCM 31522 / CIP 106686 / LMG 19005 / NCIMB 14063 / MR-1) protein is Arginine--tRNA ligase.